The chain runs to 259 residues: Thiazole synthase (259 aa).

The Schiff-base intermediate with DXP role is filled by Lys95. 1-deoxy-D-xylulose 5-phosphate is bound by residues Gly156, 183–184, and 205–206; these read AG and NS.

This sequence belongs to the ThiG family. In terms of assembly, homotetramer. Forms heterodimers with either ThiH or ThiS.

It localises to the cytoplasm. It catalyses the reaction [ThiS sulfur-carrier protein]-C-terminal-Gly-aminoethanethioate + 2-iminoacetate + 1-deoxy-D-xylulose 5-phosphate = [ThiS sulfur-carrier protein]-C-terminal Gly-Gly + 2-[(2R,5Z)-2-carboxy-4-methylthiazol-5(2H)-ylidene]ethyl phosphate + 2 H2O + H(+). The protein operates within cofactor biosynthesis; thiamine diphosphate biosynthesis. In terms of biological role, catalyzes the rearrangement of 1-deoxy-D-xylulose 5-phosphate (DXP) to produce the thiazole phosphate moiety of thiamine. Sulfur is provided by the thiocarboxylate moiety of the carrier protein ThiS. In vitro, sulfur can be provided by H(2)S. The chain is Thiazole synthase from Coxiella burnetii (strain CbuK_Q154) (Coxiella burnetii (strain Q154)).